The following is a 182-amino-acid chain: Ribosome-recycling factor (182 aa).

The disordered stretch occupies residues 136–160; it reads VKKSEKDGDLSEDQSRDEQEKIQKE.

This sequence belongs to the RRF family.

Its subcellular location is the cytoplasm. Functionally, responsible for the release of ribosomes from messenger RNA at the termination of protein biosynthesis. May increase the efficiency of translation by recycling ribosomes from one round of translation to another. In Prochlorococcus marinus (strain NATL1A), this protein is Ribosome-recycling factor.